Reading from the N-terminus, the 369-residue chain is Anhydro-N-acetylmuramic acid kinase (369 aa).

12 to 19 provides a ligand contact to ATP; the sequence is GTSLDGVD.

Belongs to the anhydro-N-acetylmuramic acid kinase family.

It carries out the reaction 1,6-anhydro-N-acetyl-beta-muramate + ATP + H2O = N-acetyl-D-muramate 6-phosphate + ADP + H(+). The protein operates within amino-sugar metabolism; 1,6-anhydro-N-acetylmuramate degradation. Its pathway is cell wall biogenesis; peptidoglycan recycling. Its function is as follows. Catalyzes the specific phosphorylation of 1,6-anhydro-N-acetylmuramic acid (anhMurNAc) with the simultaneous cleavage of the 1,6-anhydro ring, generating MurNAc-6-P. Is required for the utilization of anhMurNAc either imported from the medium or derived from its own cell wall murein, and thus plays a role in cell wall recycling. This is Anhydro-N-acetylmuramic acid kinase from Shigella flexneri.